The primary structure comprises 285 residues: 2-dehydro-3-deoxyphosphooctonate aldolase (285 aa).

It belongs to the KdsA family.

It localises to the cytoplasm. It catalyses the reaction D-arabinose 5-phosphate + phosphoenolpyruvate + H2O = 3-deoxy-alpha-D-manno-2-octulosonate-8-phosphate + phosphate. It functions in the pathway carbohydrate biosynthesis; 3-deoxy-D-manno-octulosonate biosynthesis; 3-deoxy-D-manno-octulosonate from D-ribulose 5-phosphate: step 2/3. The protein operates within bacterial outer membrane biogenesis; lipopolysaccharide biosynthesis. The polypeptide is 2-dehydro-3-deoxyphosphooctonate aldolase (Methylibium petroleiphilum (strain ATCC BAA-1232 / LMG 22953 / PM1)).